A 499-amino-acid polypeptide reads, in one-letter code: Maturase K (499 aa).

This sequence belongs to the intron maturase 2 family. MatK subfamily.

It is found in the plastid. The protein localises to the chloroplast. Usually encoded in the trnK tRNA gene intron. Probably assists in splicing its own and other chloroplast group II introns. The sequence is that of Maturase K from Camellia sasanqua (Christmas camellia).